Here is a 143-residue protein sequence, read N- to C-terminus: Glutaredoxin-2 (143 aa).

The transit peptide at 1 to 30 (METNFSFDSNLIVIIIITLFATRIIAKRFL) directs the protein to the mitochondrion. Ser37 carries the phosphoserine modification. The region spanning 41–143 (VAHVKDLIGQ…LAEILKPVFQ (103 aa)) is the Glutaredoxin domain. 58 to 63 (KTYCPY) lines the glutathione pocket. The residue at position 61 (Cys61) is an S-glutathionyl cysteine; alternate. Cys61 and Cys64 are oxidised to a cystine. Ser91 carries the post-translational modification Phosphoserine. Glutathione-binding positions include Val109 and 122–123 (NS).

Belongs to the glutaredoxin family.

The protein resides in the cytoplasm. Its subcellular location is the mitochondrion. The catalysed reaction is 2 glutathione + H2O2 = glutathione disulfide + 2 H2O. The enzyme catalyses 1-chloro-2,4-dinitrobenzene + glutathione = 2,4-dinitrophenyl-S-glutathione + chloride + H(+). It carries out the reaction RX + glutathione = an S-substituted glutathione + a halide anion + H(+). Functionally, component of the glutathione system which performs several activities such as glutathione-dependent oxidoreductase, glutathione peroxidase and glutathione S-transferase (GST) activity. The disulfide bond functions as an electron carrier in the glutathione-dependent synthesis of deoxyribonucleotides by the enzyme ribonucleotide reductase. In addition, it is also involved in reducing cytosolic protein- and non-protein-disulfides in a coupled system with glutathione reductase. Required for resistance to reactive oxygen species (ROS) by directly reducing hydroperoxides and for the detoxification of ROS-mediated damage. GRX2 is more active as an oxidoreductase than GRX1. Responsible for the S-glutathionylation of DHBP synthase. This Saccharomyces cerevisiae (strain ATCC 204508 / S288c) (Baker's yeast) protein is Glutaredoxin-2 (GRX2).